The following is a 141-amino-acid chain: ATP synthase epsilon chain (141 aa).

It belongs to the ATPase epsilon chain family. In terms of assembly, F-type ATPases have 2 components, CF(1) - the catalytic core - and CF(0) - the membrane proton channel. CF(1) has five subunits: alpha(3), beta(3), gamma(1), delta(1), epsilon(1). CF(0) has three main subunits: a, b and c.

It localises to the cell inner membrane. Its function is as follows. Produces ATP from ADP in the presence of a proton gradient across the membrane. The protein is ATP synthase epsilon chain of Burkholderia ambifaria (strain ATCC BAA-244 / DSM 16087 / CCUG 44356 / LMG 19182 / AMMD) (Burkholderia cepacia (strain AMMD)).